Reading from the N-terminus, the 333-residue chain is Mitochondrial glycine transporter (333 aa).

Residues 1–25 (MTNAATDKSVASVARDVSTGKPGKS) are disordered. Solcar repeat units lie at residues 26 to 109 (PDAA…MRAA), 127 to 220 (LLPM…FKND), and 236 to 319 (RSSV…LIKS). The next 6 helical transmembrane spans lie at 32 to 57 (LLSG…TRLQ), 84 to 110 (GAVP…RAAV), 133 to 158 (LATG…TRFE), 195 to 218 (GSVA…EGFK), 240 to 266 (INSS…KTRL), and 294 to 312 (GLSL…SWCI).

Belongs to the mitochondrial carrier (TC 2.A.29) family. SLC25A38 subfamily.

The protein localises to the mitochondrion inner membrane. It carries out the reaction glycine(in) = glycine(out). In terms of biological role, mitochondrial glycine transporter that imports glycine into the mitochondrial matrix. Plays an important role in providing glycine for the first enzymatic step in heme biosynthesis, the condensation of glycine with succinyl-CoA to produce 5-aminolevulinate (ALA) in the mitochondrial matrix. The polypeptide is Mitochondrial glycine transporter (Scheffersomyces stipitis (strain ATCC 58785 / CBS 6054 / NBRC 10063 / NRRL Y-11545) (Yeast)).